A 274-amino-acid polypeptide reads, in one-letter code: Copper chaperone for superoxide dismutase (274 aa).

The region spanning 11 to 74 is the HMA domain; the sequence is MCALEFTVQM…LLESTGRQAV (64 aa). 2 residues coordinate Cu cation: Cys-22 and Cys-25. A Glycyl lysine isopeptide (Lys-Gly) (interchain with G-Cter in ubiquitin) cross-link involves residue Lys-76. Positions 88 to 234 are superoxide dismutase-like; sequence AAVAIMEGSG…LACGIIARSA (147 aa). An intrachain disulfide couples Cys-141 to Cys-227. Residues His-147, His-155, His-164, and Asp-167 each coordinate Zn(2+). Residues Lys-189, Lys-216, and Lys-241 each participate in a glycyl lysine isopeptide (Lys-Gly) (interchain with G-Cter in ubiquitin) cross-link. The Cu cation site is built by Cys-244 and Cys-246. Ser-267 carries the post-translational modification Phosphoserine.

The protein in the C-terminal section; belongs to the Cu-Zn superoxide dismutase family. As to quaternary structure, homodimer, and heterodimer with SOD1. Interacts with COMMD1. Interacts with XIAP/BIRC4. Interacts with SLC31A1(via C-terminal domain); this interaction is Cu(1+)-mediated. The heterodimer CCS:SOD1 interacts with SLC31A1; this heterotrimer is Cu(1+)-mediated and its maintenance is regulated through SOD1 activation. Cu(2+) serves as cofactor. The cofactor is Zn(2+). Post-translationally, ubiquitinion by XIAP/BIRC4 leads to enhancement of its chaperone activity toward its physiologic target, SOD1, rather than proteasomal degradation. XIAP/BIRC4 preferentially ubiquitinates at Lys-241.

The protein localises to the cytoplasm. Its function is as follows. Delivers copper to copper zinc superoxide dismutase (SOD1). This is Copper chaperone for superoxide dismutase from Rattus norvegicus (Rat).